We begin with the raw amino-acid sequence, 152 residues long: Putative pre-16S rRNA nuclease (152 aa).

Belongs to the YqgF nuclease family.

The protein resides in the cytoplasm. Could be a nuclease involved in processing of the 5'-end of pre-16S rRNA. The chain is Putative pre-16S rRNA nuclease from Nitrosococcus oceani (strain ATCC 19707 / BCRC 17464 / JCM 30415 / NCIMB 11848 / C-107).